Here is a 698-residue protein sequence, read N- to C-terminus: Elongation factor G 1 (698 aa).

One can recognise a tr-type G domain in the interval 8 to 290 (ERYRNIGICA…AVIEFLPAPV (283 aa)). GTP contacts are provided by residues 17–24 (AHVDAGKT), 88–92 (DTPGH), and 142–145 (NKMD).

Belongs to the TRAFAC class translation factor GTPase superfamily. Classic translation factor GTPase family. EF-G/EF-2 subfamily.

It is found in the cytoplasm. Functionally, catalyzes the GTP-dependent ribosomal translocation step during translation elongation. During this step, the ribosome changes from the pre-translocational (PRE) to the post-translocational (POST) state as the newly formed A-site-bound peptidyl-tRNA and P-site-bound deacylated tRNA move to the P and E sites, respectively. Catalyzes the coordinated movement of the two tRNA molecules, the mRNA and conformational changes in the ribosome. The polypeptide is Elongation factor G 1 (Aliivibrio fischeri (strain ATCC 700601 / ES114) (Vibrio fischeri)).